Consider the following 548-residue polypeptide: Non-structural protein NS1 (548 aa).

It belongs to the orbivirus non-structural protein NS1 family.

The chain is Non-structural protein NS1 (Segment-5) from African horse sickness virus (AHSV).